The following is a 179-amino-acid chain: Cell division protein ZapC (179 aa).

It belongs to the ZapC family. In terms of assembly, interacts directly with FtsZ.

It is found in the cytoplasm. In terms of biological role, contributes to the efficiency of the cell division process by stabilizing the polymeric form of the cell division protein FtsZ. Acts by promoting interactions between FtsZ protofilaments and suppressing the GTPase activity of FtsZ. The sequence is that of Cell division protein ZapC from Aliivibrio salmonicida (strain LFI1238) (Vibrio salmonicida (strain LFI1238)).